Here is a 61-residue protein sequence, read N- to C-terminus: MAVPKKKTSKSRRDMRRSHHALKPSAYGECPNCGELKRPHHVCTSCGHYDGREVVSEDVAA.

A compositionally biased stretch (basic residues) spans 1–22 (MAVPKKKTSKSRRDMRRSHHAL). The segment at 1–27 (MAVPKKKTSKSRRDMRRSHHALKPSAY) is disordered.

It belongs to the bacterial ribosomal protein bL32 family.

This chain is Large ribosomal subunit protein bL32, found in Rhodospirillum rubrum (strain ATCC 11170 / ATH 1.1.1 / DSM 467 / LMG 4362 / NCIMB 8255 / S1).